Consider the following 404-residue polypeptide: S-adenosylmethionine synthase (404 aa).

H17 provides a ligand contact to ATP. Residue D19 coordinates Mg(2+). E45 contacts K(+). L-methionine-binding residues include E58 and Q101. The segment at 101–111 is flexible loop; it reads QSPDIAMGVDQ. ATP contacts are provided by residues 177-179, 244-245, D253, 259-260, A276, and K280; these read DGK, RF, and RK. Residue D253 participates in L-methionine binding. Residue K284 coordinates L-methionine.

Belongs to the AdoMet synthase family. In terms of assembly, homotetramer; dimer of dimers. Mg(2+) is required as a cofactor. The cofactor is K(+).

Its subcellular location is the cytoplasm. The enzyme catalyses L-methionine + ATP + H2O = S-adenosyl-L-methionine + phosphate + diphosphate. It functions in the pathway amino-acid biosynthesis; S-adenosyl-L-methionine biosynthesis; S-adenosyl-L-methionine from L-methionine: step 1/1. Functionally, catalyzes the formation of S-adenosylmethionine (AdoMet) from methionine and ATP. The overall synthetic reaction is composed of two sequential steps, AdoMet formation and the subsequent tripolyphosphate hydrolysis which occurs prior to release of AdoMet from the enzyme. The polypeptide is S-adenosylmethionine synthase (Geobacillus thermodenitrificans (strain NG80-2)).